Here is a 604-residue protein sequence, read N- to C-terminus: MMRAVWEALAALAAVACLVGAVRGGPGLSMFAGQAAQPDPCSDENGHPRRCIPDFVNAAFGKDVRVSSTCGRPPARYCVVSERGEERLRSCHLCNSSDPKKAHPPAFLTDLNNPHNLTCWQSENYLQFPHNVTLTLSLGKKFEVTYVSLQFCSPRPESMAIYKSMDYGRTWVPFQFYSTQCRKMYNRPHRAPITKQNEQEAVCTDSHTDMRPLSGGLIAFSTLDGRPSAHDFDNSPVLQDWVTATDIRVAFSRLHTFGDENEDDSELARDSYYYAVSDLQVGGRCKCNGHAARCVRDRDDSLVCDCRHNTAGPECDRCKPFHYDRPWQRATAREANECVACNCNLHARRCRFNMELYKLSGRKSGGVCLNCRHNTAGRHCHYCKEGFYRDMGKPITHRKACKACDCHPVGAAGKTCNQTTGQCPCKDGVTGITCNRCAKGYQQSRSPIAPCIKIPVAPPTTAASSMEEPEDCDSYCKASKGKLKMNMKKYCRKDYAVQIHILKADKAGDWWKFTVNIISVYKQGTSRIRRGDQSLWIRSRDIAXKCPKIKPLKKYLLLGNAEDSPDQSGIVADKSXLVIQWRDTWARRXRKFQQREKKGKCKKA.

The N-terminal stretch at 1–24 (MMRAVWEALAALAAVACLVGAVRG) is a signal peptide. In terms of domain architecture, Laminin N-terminal spans 47–284 (HPRRCIPDFV…AVSDLQVGGR (238 aa)). Residues asparagine 95, asparagine 116, and asparagine 131 are each glycosylated (N-linked (GlcNAc...) asparagine). Intrachain disulfides connect cysteine 119–cysteine 152, cysteine 285–cysteine 294, cysteine 287–cysteine 304, cysteine 306–cysteine 315, cysteine 318–cysteine 338, cysteine 341–cysteine 350, cysteine 343–cysteine 368, cysteine 371–cysteine 380, cysteine 383–cysteine 401, cysteine 404–cysteine 416, cysteine 406–cysteine 423, cysteine 425–cysteine 434, cysteine 437–cysteine 451, cysteine 472–residue 544, and cysteine 491–cysteine 601. Laminin EGF-like domains lie at 285–340 (CKCN…ECVA), 341–403 (CNCN…ACKA), and 404–453 (CDCH…PCIK). Asparagine 417 carries N-linked (GlcNAc...) asparagine glycosylation. An NTR domain is found at 472-601 (CDSYCKASKG…FQQREKKGKC (130 aa)). The short motif at 530–532 (RGD) is the Cell attachment site element.

Binds to its receptors; DCC, UNC5A, UNC5B, UNC5C and probably UNC5D. Binds to its receptor; DSCAM. Interacts with APP.

The protein resides in the secreted. It localises to the cytoplasm. Netrins control guidance of CNS commissural axons and peripheral motor axons. Its association with either DCC or some UNC5 receptors will lead to axon attraction or repulsion, respectively. Binding to UNC5C might cause dissociation of UNC5C from polymerized TUBB3 in microtubules and thereby lead to increased microtubule dynamics and axon repulsion. Involved in dorsal root ganglion axon projection towards the spinal cord. It also serves as a survival factor via its association with its receptors which prevent the initiation of apoptosis. Involved in colorectal tumorigenesis by regulating apoptosis. This is Netrin-1 (Ntn1) from Rattus norvegicus (Rat).